A 346-amino-acid polypeptide reads, in one-letter code: MNEREYIGRGRRKLEHLRFFQEDSKGSNGLEDVHLVHQALPELNWSDIDLTCRWLGKTLAAPFIINALTGGPPETLAINAALARVARRTGIALAVGSQRAGLENKEWRESFTIVRRENANGLILANIGAGNSPADAGEAVAMIAADGLQVHLNAAQELIMPEGDRAFRGWLENIRGMVNTLGVPVIAKEVGFGLSRETALQLYQAGVRIMDVGGRGGTNFAAIEERRRGRSVAALAGWGLSTAVSILEIRELGLPVEVVATGGIRSALDAARALALGAKIVGAAGYFLKILLEQGEDALTEEILQWQEDLKRICLLTGCTTPAELATKPVVITGQTRAWLEGRQRH.

12–13 (RK) provides a ligand contact to substrate. FMN contacts are provided by residues 67–69 (ALT), Ser97, and Asn126. A substrate-binding site is contributed by 97–99 (SQR). Gln156 is a substrate binding site. A Mg(2+)-binding site is contributed by Glu157. Residues Lys188, Thr218, 263–265 (GIR), and 284–285 (AG) contribute to the FMN site.

This sequence belongs to the IPP isomerase type 2 family. Homooctamer. Dimer of tetramers. FMN serves as cofactor. The cofactor is NADPH. Mg(2+) is required as a cofactor.

Its subcellular location is the cytoplasm. The catalysed reaction is isopentenyl diphosphate = dimethylallyl diphosphate. Involved in the biosynthesis of isoprenoids. Catalyzes the 1,3-allylic rearrangement of the homoallylic substrate isopentenyl (IPP) to its allylic isomer, dimethylallyl diphosphate (DMAPP). The polypeptide is Isopentenyl-diphosphate delta-isomerase (Moorella thermoacetica (strain ATCC 39073 / JCM 9320)).